We begin with the raw amino-acid sequence, 166 residues long: 2-C-methyl-D-erythritol 2,4-cyclodiphosphate synthase (166 aa).

The a divalent metal cation site is built by D12 and H14. 4-CDP-2-C-methyl-D-erythritol 2-phosphate-binding positions include 12 to 14 (DSH) and 38 to 39 (HS). Residue H46 participates in a divalent metal cation binding. Residues 60 to 62 (DIG), 65 to 69 (FPDTD), and R146 each bind 4-CDP-2-C-methyl-D-erythritol 2-phosphate.

Belongs to the IspF family. Homotrimer. A divalent metal cation serves as cofactor.

The catalysed reaction is 4-CDP-2-C-methyl-D-erythritol 2-phosphate = 2-C-methyl-D-erythritol 2,4-cyclic diphosphate + CMP. Its pathway is isoprenoid biosynthesis; isopentenyl diphosphate biosynthesis via DXP pathway; isopentenyl diphosphate from 1-deoxy-D-xylulose 5-phosphate: step 4/6. Involved in the biosynthesis of isopentenyl diphosphate (IPP) and dimethylallyl diphosphate (DMAPP), two major building blocks of isoprenoid compounds. Catalyzes the conversion of 4-diphosphocytidyl-2-C-methyl-D-erythritol 2-phosphate (CDP-ME2P) to 2-C-methyl-D-erythritol 2,4-cyclodiphosphate (ME-CPP) with a corresponding release of cytidine 5-monophosphate (CMP). The polypeptide is 2-C-methyl-D-erythritol 2,4-cyclodiphosphate synthase (Gemmatimonas aurantiaca (strain DSM 14586 / JCM 11422 / NBRC 100505 / T-27)).